Here is a 264-residue protein sequence, read N- to C-terminus: Small ribosomal subunit protein uS2 (264 aa).

The protein belongs to the universal ribosomal protein uS2 family.

This is Small ribosomal subunit protein uS2 from Latilactobacillus sakei subsp. sakei (strain 23K) (Lactobacillus sakei subsp. sakei).